A 298-amino-acid polypeptide reads, in one-letter code: GTPase Era (298 aa).

One can recognise an Era-type G domain in the interval 4–171; that stretch reads KSGFVSIVGR…VEGIFELLPE (168 aa). The segment at 12 to 19 is G1; sequence GRPNVGKS. A GTP-binding site is contributed by 12 to 19; the sequence is GRPNVGKS. Residues 38 to 42 form a G2 region; the sequence is QTTRN. A G3 region spans residues 59–62; the sequence is DTPG. GTP contacts are provided by residues 59 to 63 and 121 to 124; these read DTPGV and NKID. A G4 region spans residues 121–124; sequence NKID. The G5 stretch occupies residues 150 to 152; that stretch reads ISA. Residues 202 to 280 enclose the KH type-2 domain; the sequence is TREEIPHSVA…YLDLWVKVKE (79 aa).

It belongs to the TRAFAC class TrmE-Era-EngA-EngB-Septin-like GTPase superfamily. Era GTPase family. As to quaternary structure, monomer.

It is found in the cytoplasm. Its subcellular location is the cell membrane. Functionally, an essential GTPase that binds both GDP and GTP, with rapid nucleotide exchange. Plays a role in 16S rRNA processing and 30S ribosomal subunit biogenesis and possibly also in cell cycle regulation and energy metabolism. The chain is GTPase Era from Carboxydothermus hydrogenoformans (strain ATCC BAA-161 / DSM 6008 / Z-2901).